Consider the following 575-residue polypeptide: Transport inhibitor response 1-like protein Os04g0395600 (575 aa).

One can recognise an F-box domain in the interval 1–45; it reads MTYFPEEVVEHIFSFLPAQRDRNTVSLVCKVWYEIERLSRRGVFV. A 1D-myo-inositol hexakisphosphate-binding site is contributed by Lys69. The tract at residues 76 to 77 is interaction with auxin-responsive proteins; the sequence is DF. 1D-myo-inositol hexakisphosphate is bound by residues 108 to 109 and Arg340; that span reads KR. The interval 343-348 is interaction with auxin-responsive proteins; the sequence is PSDFYV. Residue 396 to 398 coordinates 1D-myo-inositol hexakisphosphate; that stretch reads RFR. The interaction with auxin-responsive proteins stretch occupies residues 400-404; it reads CILEP. Arg431 serves as a coordination point for 1D-myo-inositol hexakisphosphate. The tract at residues 459-460 is interaction with auxin-responsive proteins; the sequence is AF. Residues 479–480 and Arg504 each bind 1D-myo-inositol hexakisphosphate; that span reads RK.

Part of a SCF (SKP1-cullin-F-box) protein ligase complex. May interact with auxin and auxin-responsive proteins.

Its subcellular location is the nucleus. It participates in protein modification; protein ubiquitination. The chain is Transport inhibitor response 1-like protein Os04g0395600 from Oryza sativa subsp. japonica (Rice).